Reading from the N-terminus, the 447-residue chain is NADP-specific glutamate dehydrogenase (447 aa).

The substrate site is built by lysine 92, glutamine 113, and lysine 116. Lysine 128 functions as the Proton donor in the catalytic mechanism. Substrate is bound at residue glycine 167. NADP(+)-binding residues include threonine 211 and asparagine 242. Residue serine 380 coordinates substrate.

It belongs to the Glu/Leu/Phe/Val dehydrogenases family. In terms of assembly, homohexamer.

The enzyme catalyses L-glutamate + NADP(+) + H2O = 2-oxoglutarate + NH4(+) + NADPH + H(+). Its function is as follows. Catalyzes the reversible oxidative deamination of glutamate to alpha-ketoglutarate and ammonia. This is NADP-specific glutamate dehydrogenase (gdhA) from Salmonella typhi.